We begin with the raw amino-acid sequence, 601 residues long: NADH-ubiquinone oxidoreductase chain 5 (601 aa).

15 helical membrane passes run 3 to 23, 36 to 56, 84 to 104, 114 to 134, 140 to 160, 171 to 191, 201 to 221, 240 to 260, 272 to 292, 324 to 346, 365 to 385, 404 to 426, 456 to 476, 483 to 503, and 581 to 601; these read LIMP…MMSY, VTSS…MFLL, FFSI…MEFS, INQF…LVTA, LFIG…WWYG, AILY…WLLL, IFML…AAAG, TPVS…FLLV, ILTM…ICAL, AFLH…GSII, MPFT…MPFL, NAWA…TRLI, LALG…PLIT, LYMK…AMGL, and LIKL…MLII.

This sequence belongs to the complex I subunit 5 family.

The protein resides in the mitochondrion inner membrane. It catalyses the reaction a ubiquinone + NADH + 5 H(+)(in) = a ubiquinol + NAD(+) + 4 H(+)(out). In terms of biological role, core subunit of the mitochondrial membrane respiratory chain NADH dehydrogenase (Complex I) that is believed to belong to the minimal assembly required for catalysis. Complex I functions in the transfer of electrons from NADH to the respiratory chain. The immediate electron acceptor for the enzyme is believed to be ubiquinone. The sequence is that of NADH-ubiquinone oxidoreductase chain 5 (MT-ND5) from Dasypus novemcinctus (Nine-banded armadillo).